Here is a 156-residue protein sequence, read N- to C-terminus: Small ribosomal subunit protein uS7 (156 aa).

This sequence belongs to the universal ribosomal protein uS7 family. As to quaternary structure, part of the 30S ribosomal subunit. Contacts proteins S9 and S11.

Its function is as follows. One of the primary rRNA binding proteins, it binds directly to 16S rRNA where it nucleates assembly of the head domain of the 30S subunit. Is located at the subunit interface close to the decoding center, probably blocks exit of the E-site tRNA. The polypeptide is Small ribosomal subunit protein uS7 (Desulfosudis oleivorans (strain DSM 6200 / JCM 39069 / Hxd3) (Desulfococcus oleovorans)).